Here is a 231-residue protein sequence, read N- to C-terminus: Glutathione-specific gamma-glutamylcyclotransferase (231 aa).

49-54 (IFGYGS) is a substrate binding site. E127 acts as the Proton acceptor in catalysis.

It belongs to the gamma-glutamylcyclotransferase family. ChaC subfamily.

The catalysed reaction is glutathione = L-cysteinylglycine + 5-oxo-L-proline. Functionally, catalyzes the cleavage of glutathione into 5-oxo-L-proline and a Cys-Gly dipeptide. Acts specifically on glutathione, but not on other gamma-glutamyl peptides. The chain is Glutathione-specific gamma-glutamylcyclotransferase from Escherichia coli (strain K12).